The sequence spans 419 residues: Protein farnesyltransferase subunit beta (419 aa).

5 PFTB repeats span residues Glu68 to Gly109, Arg119 to Asn160, Ile167 to Gly208, Leu215 to Gln256, and Ser329 to Gln371. (2E,6E)-farnesyl diphosphate-binding positions include His193–Tyr196 and Arg235–Lys238. Zn(2+)-binding residues include Asp241 and Cys243. Residue Tyr244 to Trp247 participates in (2E,6E)-farnesyl diphosphate binding. His359 serves as a coordination point for Zn(2+).

The protein belongs to the protein prenyltransferase subunit beta family. As to quaternary structure, heterodimer of FTA and FTB. Zn(2+) serves as cofactor.

The catalysed reaction is L-cysteinyl-[protein] + (2E,6E)-farnesyl diphosphate = S-(2E,6E)-farnesyl-L-cysteinyl-[protein] + diphosphate. Functionally, catalyzes the transfer of a farnesyl moiety from farnesyl diphosphate to a cysteine at the fourth position from the C-terminus of several proteins. The beta subunit FTB is responsible for peptide-binding. The protein is Protein farnesyltransferase subunit beta (FTB) of Pisum sativum (Garden pea).